The primary structure comprises 422 residues: UDP-N-acetylglucosamine 1-carboxyvinyltransferase (422 aa).

Lysine 22–asparagine 23 lines the phosphoenolpyruvate pocket. Arginine 92 serves as a coordination point for UDP-N-acetyl-alpha-D-glucosamine. Cysteine 116 serves as the catalytic Proton donor. Cysteine 116 carries the post-translational modification 2-(S-cysteinyl)pyruvic acid O-phosphothioketal. UDP-N-acetyl-alpha-D-glucosamine contacts are provided by residues arginine 121 to leucine 125, aspartate 307, and leucine 329.

This sequence belongs to the EPSP synthase family. MurA subfamily.

Its subcellular location is the cytoplasm. The enzyme catalyses phosphoenolpyruvate + UDP-N-acetyl-alpha-D-glucosamine = UDP-N-acetyl-3-O-(1-carboxyvinyl)-alpha-D-glucosamine + phosphate. The protein operates within cell wall biogenesis; peptidoglycan biosynthesis. Its function is as follows. Cell wall formation. Adds enolpyruvyl to UDP-N-acetylglucosamine. This chain is UDP-N-acetylglucosamine 1-carboxyvinyltransferase, found in Sulfurovum sp. (strain NBC37-1).